The primary structure comprises 377 residues: DNA-directed RNA polymerase subunit alpha (377 aa).

The alpha N-terminal domain (alpha-NTD) stretch occupies residues 1-259 (MSDSSHNLLY…KHFSVFEKMD (259 aa)). The segment at 276–377 (KDDILHKLVL…KIRLSKNTKG (102 aa)) is alpha C-terminal domain (alpha-CTD).

The protein belongs to the RNA polymerase alpha chain family. As to quaternary structure, homodimer. The RNAP catalytic core consists of 2 alpha, 1 beta, 1 beta' and 1 omega subunit. When a sigma factor is associated with the core the holoenzyme is formed, which can initiate transcription.

It carries out the reaction RNA(n) + a ribonucleoside 5'-triphosphate = RNA(n+1) + diphosphate. DNA-dependent RNA polymerase catalyzes the transcription of DNA into RNA using the four ribonucleoside triphosphates as substrates. This chain is DNA-directed RNA polymerase subunit alpha, found in Chlamydia trachomatis serovar A (strain ATCC VR-571B / DSM 19440 / HAR-13).